The sequence spans 554 residues: CTP synthase (554 aa).

The tract at residues 1–265 is amidoligase domain; it reads MTPLIFVTGG…DEIVIDQFKL (265 aa). Ser13 is a CTP binding site. Ser13 serves as a coordination point for UTP. Residues 14–19 and Asp71 each bind ATP; that span reads SLGKGI. Residues Asp71 and Glu139 each coordinate Mg(2+). CTP-binding positions include 146-148, 186-191, and Lys222; these read DIE and KTKPTQ. UTP-binding positions include 186-191 and Lys222; that span reads KTKPTQ. In terms of domain architecture, Glutamine amidotransferase type-1 spans 292-545; it reads TIAVVGKYVD…VKASRARKAG (254 aa). Residue Gly353 participates in L-glutamine binding. Catalysis depends on Cys380, which acts as the Nucleophile; for glutamine hydrolysis. L-glutamine-binding positions include 381-384, Glu404, and Arg471; that span reads YGMQ. Catalysis depends on residues His518 and Glu520.

It belongs to the CTP synthase family. Homotetramer.

It catalyses the reaction UTP + L-glutamine + ATP + H2O = CTP + L-glutamate + ADP + phosphate + 2 H(+). The catalysed reaction is L-glutamine + H2O = L-glutamate + NH4(+). The enzyme catalyses UTP + NH4(+) + ATP = CTP + ADP + phosphate + 2 H(+). The protein operates within pyrimidine metabolism; CTP biosynthesis via de novo pathway; CTP from UDP: step 2/2. Allosterically activated by GTP, when glutamine is the substrate; GTP has no effect on the reaction when ammonia is the substrate. The allosteric effector GTP functions by stabilizing the protein conformation that binds the tetrahedral intermediate(s) formed during glutamine hydrolysis. Inhibited by the product CTP, via allosteric rather than competitive inhibition. Its function is as follows. Catalyzes the ATP-dependent amination of UTP to CTP with either L-glutamine or ammonia as the source of nitrogen. Regulates intracellular CTP levels through interactions with the four ribonucleotide triphosphates. This Xylella fastidiosa (strain M12) protein is CTP synthase.